We begin with the raw amino-acid sequence, 561 residues long: Potassium-transporting ATPase potassium-binding subunit (561 aa).

10 consecutive transmembrane segments (helical) span residues 4 to 24 (IVMQ…PLGI), 65 to 85 (AVSV…VLML), 133 to 153 (IGLT…LFAV), 177 to 197 (LYIL…QGVV), 253 to 273 (FTNL…VVMF), 285 to 305 (AIMT…TISE), 380 to 400 (GLYG…LLVG), 417 to 437 (MVCL…AVAV), 484 to 504 (MVGA…ALYL), and 528 to 548 (FIGL…LPAL).

This sequence belongs to the KdpA family. In terms of assembly, the system is composed of three essential subunits: KdpA, KdpB and KdpC.

It localises to the cell membrane. Functionally, part of the high-affinity ATP-driven potassium transport (or Kdp) system, which catalyzes the hydrolysis of ATP coupled with the electrogenic transport of potassium into the cytoplasm. This subunit binds the extracellular potassium ions and delivers the ions to the membrane domain of KdpB through an intramembrane tunnel. The protein is Potassium-transporting ATPase potassium-binding subunit of Listeria monocytogenes serotype 4a (strain HCC23).